The primary structure comprises 273 residues: 3-methyl-2-oxobutanoate hydroxymethyltransferase (273 aa).

Mg(2+) is bound by residues aspartate 49 and aspartate 88. Residues 49 to 50 (DS), aspartate 88, and lysine 118 contribute to the 3-methyl-2-oxobutanoate site. Glutamate 120 contacts Mg(2+). Glutamate 187 (proton acceptor) is an active-site residue.

This sequence belongs to the PanB family. In terms of assembly, homodecamer; pentamer of dimers. Mg(2+) is required as a cofactor.

It is found in the cytoplasm. It catalyses the reaction 3-methyl-2-oxobutanoate + (6R)-5,10-methylene-5,6,7,8-tetrahydrofolate + H2O = 2-dehydropantoate + (6S)-5,6,7,8-tetrahydrofolate. The protein operates within cofactor biosynthesis; (R)-pantothenate biosynthesis; (R)-pantoate from 3-methyl-2-oxobutanoate: step 1/2. Its function is as follows. Catalyzes the reversible reaction in which hydroxymethyl group from 5,10-methylenetetrahydrofolate is transferred onto alpha-ketoisovalerate to form ketopantoate. This Sinorhizobium fredii (strain NBRC 101917 / NGR234) protein is 3-methyl-2-oxobutanoate hydroxymethyltransferase.